The primary structure comprises 576 residues: Probable lysosomal cobalamin transporter (576 aa).

A run of 10 helical transmembrane segments spans residues 8 to 28, 40 to 60, 98 to 118, 145 to 165, 188 to 208, 312 to 332, 347 to 367, 377 to 397, 419 to 439, and 503 to 523; these read LIWAVYAIVVAVLVMVASVFI, VVTFTCIVAITSLLATVLLLP, YLLYSLDAFLCLLAIPFVYFW, TISFIAIVVVLFIVGFLVPVA, VLTFTLGLLITMGLFLYILYT, LLGGIAILLITLMIWISMLLT, GYILSGIGVFNPINWIFVQSA, LTVVVLLLFGSSVVGISTIGI, LTTAMLMLTILALDYSIPMLV, and FFGTVFFWSQFIFLVIYLLVL. Residues 549–576 are disordered; it reads RLLTSSARGVGDTYQSVGGRNNFSTRAG. The span at 561–576 shows a compositional bias: polar residues; sequence TYQSVGGRNNFSTRAG. Asn570 carries N-linked (GlcNAc...) asparagine glycosylation.

The protein belongs to the LIMR family. LMBRD1 subfamily.

Its subcellular location is the lysosome membrane. In terms of biological role, probable lysosomal cobalamin transporter. Required to export cobalamin from lysosomes allowing its conversion to cofactors. This is Probable lysosomal cobalamin transporter from Aspergillus niger (strain ATCC MYA-4892 / CBS 513.88 / FGSC A1513).